A 374-amino-acid polypeptide reads, in one-letter code: WD repeat-containing protein JIP5 (374 aa).

WD repeat units follow at residues 21–61 (AYTS…GETS), 68–107 (PSKR…IQLS), 120–158 (AHEC…SIRT), 161–200 (QHFD…STPL), 205–244 (DQED…ADSV), 249–287 (GHPA…FLGV), and 290–330 (THEE…EDSD). Acidic residues predominate over residues 325–344 (LFEDSDEDDEMEEDEPDSDE). The disordered stretch occupies residues 325–374 (LFEDSDEDDEMEEDEPDSDEEKSKKKKKDNGMKDMSRGQAENDGSFFADL).

Belongs to the WD repeat WDR55 family.

It localises to the nucleus. It is found in the nucleolus. This chain is WD repeat-containing protein JIP5 (JIP5), found in Cryptococcus neoformans var. neoformans serotype D (strain B-3501A) (Filobasidiella neoformans).